We begin with the raw amino-acid sequence, 86 residues long: Elicitor peptide 5 (86 aa).

Positions 1–59 (MQQERDHKRDCCKLMPQTVKAFFKCLRFRRSSSSSSDMVKARARNEEKEEPSSIETSTR) are excised as a propeptide. A disordered region spans residues 31–86 (SSSSSSDMVKARARNEEKEEPSSIETSTRSLNVMRKGIRKQPVSSGKRGGVNDYDM). A compositionally biased stretch (basic and acidic residues) spans 39–51 (VKARARNEEKEEP).

It belongs to the brassicaceae elicitor peptide family.

Elicitor of plant defense. The sequence is that of Elicitor peptide 5 (PEP5) from Arabidopsis thaliana (Mouse-ear cress).